The following is a 386-amino-acid chain: FHA domain-containing protein At4g14490 (386 aa).

The region spanning 28–78 (IRVGRIVRGNEIAIKDAGISTKHLRIESDSGNWVIQDLGSSNGTLLNSNAL) is the FHA domain. The disordered stretch occupies residues 286–311 (KNKGKNKKADQKPLKSFENDEVTDSG). The span at 292-303 (KKADQKPLKSFE) shows a compositional bias: basic and acidic residues.

The protein is FHA domain-containing protein At4g14490 of Arabidopsis thaliana (Mouse-ear cress).